A 483-amino-acid polypeptide reads, in one-letter code: ATP synthase subunit beta (483 aa).

ATP is bound at residue Gly-169–Thr-176.

It belongs to the ATPase alpha/beta chains family. In terms of assembly, F-type ATPases have 2 components, CF(1) - the catalytic core - and CF(0) - the membrane proton channel. CF(1) has five subunits: alpha(3), beta(3), gamma(1), delta(1), epsilon(1). CF(0) has three main subunits: a(1), b(2) and c(9-12). The alpha and beta chains form an alternating ring which encloses part of the gamma chain. CF(1) is attached to CF(0) by a central stalk formed by the gamma and epsilon chains, while a peripheral stalk is formed by the delta and b chains.

The protein localises to the cell membrane. It catalyses the reaction ATP + H2O + 4 H(+)(in) = ADP + phosphate + 5 H(+)(out). Functionally, produces ATP from ADP in the presence of a proton gradient across the membrane. The catalytic sites are hosted primarily by the beta subunits. This Rhodococcus opacus (strain B4) protein is ATP synthase subunit beta.